The chain runs to 663 residues: MHHPGPPRFVATGDEVELAPRDPDPTATYTWRLTQAPAQSTVSLGDDPVEHFVPDAPGRYVVRLTAPDGEHDLTVRAFPGTLESSGTHTSGRSGGHSGGVSGGRSGPGRSGSGEYTQAGDGSDGGGGGQPRLTLRPDIEGDEAVVRADCSPHPEGTETAADLAVEFLLDDRDDVDADAVTRDGTALRIPLDALPERARIHAVAVGNHGYSVPDAVEFTRGGDGVETVTSGAGVAARRPYDAPAWAEDSVIYEIYVRTFAGERDESPFDAITDRLDYLDSLGVDAIWLTPVLQNDHAPHGYNITDFFEIASDLGTRADYERFIEAAHDRGFKVLFDLVCNHSARTHPYFESAVEGPDADYREWYEWRSDTEPETYFEWEHIANFNFDHLPVRRHLLDAVAQWADLVDGFRCDMAWAVPNGFWREIHDYCKDRDSEFLLLDETIPYIPDFQAGLFDMHFDSTTYAALRQVGGGGDAEAILGAIEGRAEIGFPEHASFMLYAENHDETRYIVDYGREAAEAAAGALFTLPGAPLLYAGQEFGQRGRRDDLAWDHADETLQSFVSDLASARHDQPALSADADLVRIPYEVRDGPSDRVVAYARTTENDAAVVVLNFGSEPTTVGLPAGTDGTDLVSGEYRGAAGDGDATVTVDSVSVFPADENDLRQ.

2 disordered regions span residues 1-28 (MHHP…PTAT) and 80-135 (GTLE…LTLR). Residues 92-111 (RSGGHSGGVSGGRSGPGRSG) are compositionally biased toward gly residues. D411 functions as the Nucleophile in the catalytic mechanism. E440 (proton donor) is an active-site residue.

Belongs to the glycosyl hydrolase 13 family.

It is found in the cytoplasm. The enzyme catalyses Endohydrolysis of (1-&gt;4)-alpha-D-glucosidic linkages in polysaccharides containing three or more (1-&gt;4)-alpha-linked D-glucose units.. The protein operates within glycan degradation; starch degradation. Stable and active over a broad range of NaCl concentrations (0.5 to 4.2 M NaCl), with maximal activity at 2.6 M NaCl. 83% and 94% of the maximum activity at 0.6 and 4.2 M NaCl, respectively. Active and stable also in KCl. Its function is as follows. Alpha-amylase that cleaves starch into oligosaccharides, the first step in starch degradation. Endo-acting enzyme which prefers a linear polysaccharide to branched polysaccharides hydrolyzing alpha-1,4 glucosidic bonds efficiently. Also has transglycosylation activity, but does not act on alpha-1,6 bonds. Higher activities of 100%, 79% and 67.8% against amylose, soluble starch and amylopectin, respectively. Lower activity of 22% against glycogen and faint or no activity against alpha-, beta- and gamma-cyclodextrin. In Haloarcula japonica (strain ATCC 49778 / DSM 6131 / JCM 7785 / NBRC 101032 / NCIMB 13157 / TR-1), this protein is Alpha-amylase MalA.